The chain runs to 94 residues: Small ribosomal subunit protein bS6 (94 aa).

The protein belongs to the bacterial ribosomal protein bS6 family.

Its function is as follows. Binds together with bS18 to 16S ribosomal RNA. This is Small ribosomal subunit protein bS6 from Clostridium botulinum (strain Kyoto / Type A2).